We begin with the raw amino-acid sequence, 2788 residues long: MNKQAVKRLHMLREVSEKLNKYNLNSHPPLNVLEQATIKQCVVGPNHAAFLLEDGRICRIGFSVQPDRLELGKPDNNDGSKLNSSSGTGRTSRPGRTSDSPWFLSGSETLGRLAGNTLGSRWSSGVGGSGGGSSGRSSAGARDSRRQTRVIRTGRDRGSGLLGSQPQPVIPASVIPEELISQAQVVLQGKSRSVIIRELQRTNLDVNLAVNNLLSRDDEDGDDGDDTASESYLPGEDLMSLLDADIHSAHPSVIIDADAMFSEDISYFGYPSFRRSSLSRLGSSRVLLLPLERDSELLRERESVLRLRERRWLDGASFDNERGSTSKEGEPNPDKKNTPVQSPVSLGEDLQWWPDKDGTKFTCIGALYSELVAVSSKGELYQWKWTESEPYRNAQNPSLHHPRATFLGLTNEKIVLLSANSIRATVATENNKVATWVDETLSSVASKLEHTAQTYSELQGERIVSLHCCALYTCAQLENNLYWWGVVPFSQRKKMLEKARAKNKKPKSSAGVQSLNVRGGRQVCLRNNPLYHAGAVAFSISAGIPKVGVLMESVWNMNDSCRFQLRSPESLKSMEKASKTIETKPESKQEPVKTEMGPPPSPASTCSDASSIASSASMPYKRRRSTPAPKEEEKVNEEQWSLREVVFVEDVKNVPVGKVLKVDGAYVAVKFPGTSSNTNCQNSSGPDADPSSLLQDCRLLRIDELQVVKTGGTPKVPDCFQRTPKKLCIPEKTEILAVNVDSKGVHAVLKTGNWVRYCIFDLATGKAEQENNFPTSSVAFLGQNERSVAIFTAGQESPIILRDGNGTIYPMAKDCMGGIRDPDWLDLPPISSLGMGVHSLINLPANSTIKKKAAIIIMAVEKQTLMQHILRCDYEACRQYLVNLEQAVVLEQNLQMLQTFISHRCDGNRNILHACVSVCFPTSNKETKEEEEAERSERNTFAERLSAVEAIANAISVVSSNGPGNRAGSSSSRSLRLREMMRRSLRAAGLGRHEAGASSSDHQDPVSPPIAPPSWVPDPPSMDPDGDIDFILAPAVGSLTTAATGGGQGPSTSTIPGPSTEPSVVESKDRKANAHFILKLLCDSAVLQPYLRELLSAKDARGMTPFMSAVSGRAYPAAITILETAQKIAKAEVSGSEKEEDVFMGMVCPSGTNPDDSPLYVLCCNDTCSFTWTGAEHINQDIFECRTCGLLESLCCCTECARVCHKGHDCKLKRTSPTAYCDCWEKCKCKTLIAGQKSARLDLLYRLLTATNLVTLPNSRGEHLLLFLVQTVARQTVEHCQYRPPRIREDRNRKTASPDDSDMPDHDLEPPRFAQLALERVLQDWNALRSMIMFGSQENKDPLSASSRIGHLLPEEQVYLNQQSGTIRLDCFTHCLIVKCTADILLLDTLLGTLVKELQNKYTPGRREEAIAVTMRFLRSVARVFVILSVEMASSKKKNNFIPQPIGKCKRVFQALLPYAVEELCNVAESLIVPVRMGIARPTAPFTLASTSIDAMQGSEELFSVEPLPPRPSSDQSSSSSQSQSSYIIRNPQQRRISQSQPVRGREEEQDDIVSADVEEVEVVEGVAGEEDHHDEQEEHGEENAEAEGHHDEHDEDGSDMELDLLAAAETESDSESNHSNQDNASGRRSVVTAATAGSEAGASSVPAFFSEDDSQSNDSSDSDSSSSQSDDIEQETFMLDEPLERTTNSSHANGAAQAPRSMQWAVRNTQHQRAASTAPSSTSTPAASSAGLIYIDPSNLRRSGTISTSAAAAAAALEASNASSYLTSASSLARAYSIVIRQISDLMGLIPKYNHLVYSQIPAAVKLTYQDAVNLQNYVEEKLIPTWNWMVSIMDSTEAQLRYGSALASAGDPGHPNHPLHASQNSARRERMTAREEASLRTLEGRRRRATLLSARQGMMSARGDFLNYALSLMRSHNDEHSDVLPVLDVCSLKHVAYVFQALIYWIKAMNQQTTLDTPQLERKRTRELLELGIDNEDSEHENDDDTSQSATLNDKDDESLPAETGQNHPFFRRSDSMTFLGCIPPNPFEVPLAEAIPLADQPHLLQPNARKEDLFGRPSQGLYSSSAGSGKCLVEVTMDRNCLEVLPTKMSYAANLKNVMNMQNRQKKAGEDQSMLAEEADSSKPGPSAHDVAAQLKSSLLAEIGLTESEGPPLTSFRPQCSFMGMVISHDMLLGRWRLSLELFGRVFMEDVGAEPGSILTELGGFEVKESKFRREMEKLRNQQSRDLSLEVDRDRDLLIQQTMRQLNNHFGRRCATTPMAVHRVKVTFKDEPGEGSGVARSFYTAIAQAFLSNEKLPNLDCIQNANKGTHTSLMQRLRNRGERDREREREREMRRSSGLRAGSRRDRDRDFRRQLSIDTRPFRPASEGNPSDDPDPLPAHRQALGERLYPRVQAMQPAFASKITGMLLELSPAQLLLLLASEDSLRARVEEAMELIVAHGRENGADSILDLGLLDSSEKVQENRKRHGSSRSVVDMDLDDTDDGDDNAPLFYQPGKRGFYTPRPGKNTEARLNCFRNIGRILGLCLLQNELCPITLNRHVIKVLLGRKVNWHDFAFFDPVMYESLRQLILASQSSDADAVFSAMDLAFAVDLCKEEGGGQVELIPNGVNIPVTPQNVYEYVRKYAEHRMLVVAEQPLHAMRKGLLDVLPKNSLEDLTAEDFRLLVNGCGEVNVQMLISFTSFNDESGENAEKLLQFKRWFWSIVERMSMTERQDLVYFWTSSPSLPASEEGFQPMPSITIRPPDDQHLPTANTCISRLYVPLYSSKQILKQKLLLAIKTKNFGFV.

Residues 68-78 (RLELGKPDNND) show a composition bias toward basic and acidic residues. Residues 68–165 (RLELGKPDNN…DRGSGLLGSQ (98 aa)) form a disordered region. The segment covering 84–101 (SSSGTGRTSRPGRTSDSP) has biased composition (low complexity). Position 100 is a phosphoserine (Ser-100). Positions 125-134 (GVGGSGGGSS) are enriched in gly residues. In terms of domain architecture, UBA spans 174–216 (VIPEELISQAQVVLQGKSRSVIIRELQRTNLDVNLAVNNLLSR). A Phosphoserine modification is found at Ser-317. Basic and acidic residues predominate over residues 318-337 (FDNERGSTSKEGEPNPDKKN). Residues 318 to 343 (FDNERGSTSKEGEPNPDKKNTPVQSP) form a disordered region. Phosphoserine occurs at positions 342 and 567. The span at 572 to 593 (KSMEKASKTIETKPESKQEPVK) shows a compositional bias: basic and acidic residues. A disordered region spans residues 572 to 636 (KSMEKASKTI…PAPKEEEKVN (65 aa)). A Phosphoserine modification is found at Ser-601. The span at 603–617 (ASTCSDASSIASSAS) shows a compositional bias: low complexity. The residue at position 626 (Thr-626) is a Phosphothreonine. Residues Ser-797, Ser-917, and Ser-1007 each carry the phosphoserine modification. Disordered stretches follow at residues 988 to 1024 (AGLG…SMDP) and 1041 to 1064 (TAAT…EPSV). Pro residues predominate over residues 1006–1022 (VSPPIAPPSWVPDPPSM). Residues 1050–1062 (PSTSTIPGPSTEP) are compositionally biased toward polar residues. Thr-1104 and Thr-1124 each carry phosphothreonine. The segment at 1166 to 1234 (DTCSFTWTGA…EKCKCKTLIA (69 aa)) adopts a UBR-type zinc-finger fold. Residues Ser-1216, Ser-1297, Ser-1344, Ser-1364, and Ser-1470 each carry the phosphoserine modification. A disordered region spans residues 1288–1308 (REDRNRKTASPDDSDMPDHDL). The interval 1504–1729 (SVEPLPPRPS…PSSTSTPAAS (226 aa)) is disordered. Positions 1513–1526 (SSDQSSSSSQSQSS) are enriched in low complexity. Residues 1527–1542 (YIIRNPQQRRISQSQP) show a composition bias toward polar residues. Ser-1538 carries the phosphoserine modification. 2 stretches are compositionally biased toward acidic residues: residues 1548 to 1563 (EEQD…EVEV) and 1594 to 1603 (HDEDGSDMEL). A compositionally biased stretch (polar residues) spans 1618–1627 (NHSNQDNASG). Composition is skewed to low complexity over residues 1630–1646 (SVVT…ASSV), 1657–1670 (SNDS…SSQS), and 1715–1729 (AAST…PAAS). Thr-1725 carries the post-translational modification Phosphothreonine. Phosphoserine is present on Ser-1730. Phosphotyrosine is present on Tyr-1735. Ser-1769 is modified (phosphoserine). A disordered region spans residues 1848 to 1881 (LASAGDPGHPNHPLHASQNSARRERMTAREEASL). Positions 1868–1881 (ARRERMTAREEASL) are enriched in basic and acidic residues. The residue at position 1959 (Thr-1959) is a Phosphothreonine. Residues 1974–2011 (GIDNEDSEHENDDDTSQSATLNDKDDESLPAETGQNHP) are disordered. The span at 1975-1988 (IDNEDSEHENDDDT) shows a compositional bias: acidic residues. Phosphoserine is present on residues Ser-1980, Ser-2016, and Ser-2018. A Phosphothreonine modification is found at Thr-2020. A Phosphoserine modification is found at Ser-2066. Residues 2106–2132 (NRQKKAGEDQSMLAEEADSSKPGPSAH) form a disordered region. Residue Thr-2203 is modified to Phosphothreonine. Phosphoserine occurs at positions 2231 and 2279. The tract at residues 2313 to 2383 (HTSLMQRLRN…SDDPDPLPAH (71 aa)) is disordered. 2 stretches are compositionally biased toward basic and acidic residues: residues 2322 to 2338 (NRGE…EMRR) and 2346 to 2358 (SRRD…RRQL). Residues 2367-2444 (PASEGNPSDD…AMELIVAHGR (78 aa)) form the PABC domain. Residues 2451–2788 (ILDLGLLDSS…AIKTKNFGFV (338 aa)) enclose the HECT domain. A phosphoserine mark is found at Ser-2459, Ser-2473, and Ser-2475. The interval 2463–2490 (VQENRKRHGSSRSVVDMDLDDTDDGDDN) is disordered. Acidic residues predominate over residues 2479–2489 (MDLDDTDDGDD). Cys-2757 serves as the catalytic Glycyl thioester intermediate.

It belongs to the UBR5 family. In terms of assembly, homotetramer; composed of a dimer of dimers. Associates with CDK9 and TFIIS/TCEA1 and forms a transcription regulatory complex made of CDK9, RNAP II, UBR5 and TFIIS/TCEA1 that can stimulate target gene transcription (e.g. gamma fibrinogen/FGG) by recruiting their promoters. Associates with the E3 ligase complex containing DYRK2, EDD/UBR5, DDB1 and DCAF1 proteins (EDVP complex). Binds TOPBP1. Interacts with PIH1D1. Interacts with CIB1. In terms of tissue distribution, highest levels found in testis. Also present in liver, kidney, lung and brain.

Its subcellular location is the nucleus. The protein localises to the cytoplasm. It catalyses the reaction S-ubiquitinyl-[E2 ubiquitin-conjugating enzyme]-L-cysteine + [acceptor protein]-L-lysine = [E2 ubiquitin-conjugating enzyme]-L-cysteine + N(6)-ubiquitinyl-[acceptor protein]-L-lysine.. Its pathway is protein modification; protein ubiquitination. In terms of biological role, E3 ubiquitin-protein ligase involved in different protein quality control pathways in the cytoplasm and nucleus. Mainly acts as a ubiquitin chain elongator that extends pre-ubiquitinated substrates. Component of the N-end rule pathway: ubiquitinates proteins bearing specific N-terminal residues that are destabilizing according to the N-end rule, leading to their degradation. Recognizes type-1 N-degrons, containing positively charged amino acids (Arg, Lys and His). Together with UBR4, part of a cytoplasm protein quality control pathway that prevents protein aggregation by catalyzing assembly of heterotypic 'Lys-11'-/'Lys-48'-linked branched ubiquitin chains on aggregated proteins, leading to substrate recognition by the segregase p97/VCP and degradation by the proteasome: UBR5 is probably branching multiple 'Lys-48'-linked chains of substrates initially modified with mixed conjugates by UBR4. Together with ITCH, catalyzes 'Lys-48'-/'Lys-63'-branched ubiquitination of TXNIP, leading to its degradation: UBR5 mediates branching of 'Lys-48'-linked chains of substrates initially modified with 'Lys-63'-linked conjugates by ITCH. Catalytic component of a nuclear protein quality control pathway that mediates ubiquitination and degradation of unpaired transcription factors (i.e. transcription factors that are not assembled into functional multiprotein complexes): specifically recognizes and binds degrons that are not accessible when transcription regulators are associated with their coactivators. Ubiquitinates various unpaired transcription regulator (MYC, SUPT4H1, SUPT5H, CDC20 and MCRS1), as well as ligand-bound nuclear receptors (ESR1, NR1H3, NR3C1, PGR, RARA, RXRA AND VDR) that are not associated with their nuclear receptor coactivators (NCOAs). Involved in maturation and/or transcriptional regulation of mRNA by mediating polyubiquitination and activation of CDK9. Also acts as a regulator of DNA damage response by acting as a suppressor of RNF168, an E3 ubiquitin-protein ligase that promotes accumulation of 'Lys-63'-linked histone H2A and H2AX at DNA damage sites, thereby acting as a guard against excessive spreading of ubiquitinated chromatin at damaged chromosomes. Regulates DNA topoisomerase II binding protein (TopBP1) in the DNA damage response. Ubiquitinates acetylated PCK1. Acts as a positive regulator of the canonical Wnt signaling pathway by mediating (1) ubiquitination and stabilization of CTNNB1, and (2) 'Lys-48'-linked ubiquitination and degradation of TLE3. Promotes disassembly of the mitotic checkpoint complex (MCC) from the APC/C complex by catalyzing ubiquitination of BUB1B, BUB3 and CDC20. Plays an essential role in extraembryonic development. Required for the maintenance of skeletal tissue homeostasis by acting as an inhibitor of hedgehog (HH) signaling. The chain is E3 ubiquitin-protein ligase UBR5 (Ubr5) from Rattus norvegicus (Rat).